Here is a 213-residue protein sequence, read N- to C-terminus: GTP-binding protein YPTC4 (213 aa).

13–21 contacts GTP; that stretch reads GDTGVGKSC. An Effector region motif is present at residues 35-43; the sequence is HDLTIGVEF. GTP contacts are provided by residues 61–65, 119–122, and 149–151; these read DTAGQ, NKCD, and SAR. Positions 194 to 213 are disordered; the sequence is AGPQTVKPGEGGAAKSSSCC. 2 S-geranylgeranyl cysteine lipidation sites follow: cysteine 212 and cysteine 213.

It belongs to the small GTPase superfamily. Rab family.

It localises to the cell membrane. Protein transport. Probably involved in vesicular traffic. In Chlamydomonas reinhardtii (Chlamydomonas smithii), this protein is GTP-binding protein YPTC4 (YPTC4).